Consider the following 387-residue polypeptide: Calcium sensing receptor, chloroplastic (387 aa).

The N-terminal 33 residues, 1-33 (MAMAEMATKSSLSAKLTLPSSSTKKTLSLRQVS), are a transit peptide targeting the chloroplast. Over 34-186 (VSLPTSTSIS…TMDTISSADP (153 aa)) the chain is Lumenal, thylakoid. The chain crosses the membrane as a helical span at residues 187-207 (SVIVVAAGAAFLAYLLLPPVF). Residues 208-387 (SAISFNFRGY…SGTKFLPSSD (180 aa)) lie on the Stromal side of the membrane. One can recognise a Rhodanese domain in the interval 231 to 352 (CTKNYLMVDI…WLQSRLGTDS (122 aa)). Position 380 is a phosphothreonine (Thr380).

In terms of processing, phosphorylation seems to be light-dependent. In terms of tissue distribution, predominantly expressed in the shoot, including guard cells.

Its subcellular location is the plastid. The protein resides in the chloroplast thylakoid membrane. In terms of biological role, modulates cytoplasmic Ca(2+) concentration and is crucial for proper stomatal regulation in response to elevated levels of external Ca(2+). May function by regulating concentrations of inositol 1,4,5-trisphosphate (IP3), which in turn triggers release of Ca(2+) from internal stores. May play a role in de-etiolation. This is Calcium sensing receptor, chloroplastic (CAS) from Arabidopsis thaliana (Mouse-ear cress).